Here is a 715-residue protein sequence, read N- to C-terminus: Integrator complex subunit 13 (715 aa).

Disordered regions lie at residues 572 to 612 (KPPE…SERI) and 626 to 659 (AEVI…SKGP). A Nuclear localization signal (NLS) motif is present at residues 581–591 (KRGRKREDKEE). The segment at 658 to 703 (GPMSLLSLWSSRINTANSRKHQEFVGRLNSVNNKAELYQHLKEENG) is cleavage module binding motif (CMBM).

The protein belongs to the Integrator subunit 13 family. As to quaternary structure, component of the Integrator complex, composed of core subunits INTS1, INTS2, INTS3, INTS4, INTS5, INTS6, INTS7, INTS8, INTS9/RC74, INTS10, INTS11/CPSF3L, INTS12, INTS13, INTS14 and INTS15. The core complex associates with protein phosphatase 2A subunits PPP2CA and PPP2R1A, to form the Integrator-PP2A (INTAC) complex. INTS13 is part of the tail subcomplex, composed of INTS10, INTS13, INTS14 and INTS15.

The protein localises to the nucleus. The protein resides in the cytoplasm. In terms of biological role, component of the integrator complex, a multiprotein complex that terminates RNA polymerase II (Pol II) transcription in the promoter-proximal region of genes. The integrator complex provides a quality checkpoint during transcription elongation by driving premature transcription termination of transcripts that are unfavorably configured for transcriptional elongation: the complex terminates transcription by (1) catalyzing dephosphorylation of the C-terminal domain (CTD) of Pol II subunit POLR2A/RPB1 and SUPT5H/SPT5, (2) degrading the exiting nascent RNA transcript via endonuclease activity and (3) promoting the release of Pol II from bound DNA. The integrator complex is also involved in terminating the synthesis of non-coding Pol II transcripts, such as enhancer RNAs (eRNAs), small nuclear RNAs (snRNAs), telomerase RNAs and long non-coding RNAs (lncRNAs). Within the integrator complex, INTS13 is part of the integrator tail module and acts as a platform for the recruitment of transcription factors at promoters. Plays a role in gastrulation and early embryogenesis. This is Integrator complex subunit 13 from Xenopus laevis (African clawed frog).